The primary structure comprises 466 residues: Cell division protein FtsP (466 aa).

Positions 1–28 (MGNYSRRRFLQGSLAIVAGNVLPCAAMA) form a signal peptide, tat-type signal.

It belongs to the FtsP family. Post-translationally, predicted to be exported by the Tat system. The position of the signal peptide cleavage has not been experimentally proven.

Its subcellular location is the periplasm. Cell division protein that is required for growth during stress conditions. May be involved in protecting or stabilizing the divisomal assembly under conditions of stress. The polypeptide is Cell division protein FtsP (Gallibacterium anatis (strain UMN179) (Pasteurella anatis)).